The primary structure comprises 210 residues: Vacuolar protein sorting-associated protein 28 homolog (210 aa).

Positions 1–106 (MSSQNANLMR…REGRPITVKD (106 aa)) constitute a VPS28 N-terminal domain. The 97-residue stretch at 110–206 (NVLKHIASIV…AYQAFNKALN (97 aa)) folds into the VPS28 C-terminal domain.

Belongs to the VPS28 family. Component of the ESCRT-I complex (endosomal sorting complex required for transport I). As to expression, expressed in embryos.

The protein resides in the endosome. In terms of biological role, component of the ESCRT-I complex, a regulator of vesicular trafficking process. The polypeptide is Vacuolar protein sorting-associated protein 28 homolog (vps-28) (Caenorhabditis elegans).